The sequence spans 483 residues: Proline--tRNA ligase (483 aa).

Belongs to the class-II aminoacyl-tRNA synthetase family. ProS type 3 subfamily. As to quaternary structure, homodimer.

It localises to the cytoplasm. It carries out the reaction tRNA(Pro) + L-proline + ATP = L-prolyl-tRNA(Pro) + AMP + diphosphate. Functionally, catalyzes the attachment of proline to tRNA(Pro) in a two-step reaction: proline is first activated by ATP to form Pro-AMP and then transferred to the acceptor end of tRNA(Pro). The polypeptide is Proline--tRNA ligase (Mycoplasma pneumoniae (strain ATCC 29342 / M129 / Subtype 1) (Mycoplasmoides pneumoniae)).